Reading from the N-terminus, the 153-residue chain is Insulin-like growth factor 1 (153 aa).

Residues 49–77 form a b region; the sequence is GPETLCGAELVDALQFVCGPRGFYFNKPT. Disulfide bonds link cysteine 54/cysteine 96, cysteine 66/cysteine 109, and cysteine 95/cysteine 100. The tract at residues 78-89 is c; it reads GYGSSIRRAPQT. Residues 90–110 form an a region; that stretch reads GIVDECCFRSCDLRRLEMYCA. The segment at 111 to 118 is d; it reads PLKPTKAA. Positions 119–153 are cleaved as a propeptide — e peptide; it reads RSIRAQRHTDMPKTQKEVHLKNTSRGSAGNKTYRM. A disordered region spans residues 120–153; it reads SIRAQRHTDMPKTQKEVHLKNTSRGSAGNKTYRM. Positions 125–138 are enriched in basic and acidic residues; that stretch reads RHTDMPKTQKEVHL. Residues 139–153 show a composition bias toward polar residues; the sequence is KNTSRGSAGNKTYRM.

The protein belongs to the insulin family. Forms a ternary complex with IGFR1 and ITGAV:ITGB3. Forms a ternary complex with IGFR1 and ITGA6:ITGB4. Interacts with SH2D3C isoform 2. Forms a ternary complex with IGFBP3 and ALS.

It is found in the secreted. The insulin-like growth factors, isolated from plasma, are structurally and functionally related to insulin but have a much higher growth-promoting activity. May be a physiological regulator of [1-14C]-2-deoxy-D-glucose (2DG) transport and glycogen synthesis in osteoblasts. Stimulates glucose transport in bone-derived osteoblastic (PyMS) cells and is effective at much lower concentrations than insulin, not only regarding glycogen and DNA synthesis but also with regard to enhancing glucose uptake. May play a role in synapse maturation. Ca(2+)-dependent exocytosis of IGF1 is required for sensory perception of smell in the olfactory bulb. Acts as a ligand for IGF1R. Binds to the alpha subunit of IGF1R, leading to the activation of the intrinsic tyrosine kinase activity which autophosphorylates tyrosine residues in the beta subunit thus initiating a cascade of down-stream signaling events leading to activation of the PI3K-AKT/PKB and the Ras-MAPK pathways. Binds to integrins ITGAV:ITGB3 and ITGA6:ITGB4. Its binding to integrins and subsequent ternary complex formation with integrins and IGFR1 are essential for IGF1 signaling. Induces the phosphorylation and activation of IGFR1, MAPK3/ERK1, MAPK1/ERK2 and AKT1. As part of the MAPK/ERK signaling pathway, acts as a negative regulator of apoptosis in cardiomyocytes via promotion of STUB1/CHIP-mediated ubiquitination and degradation of ICER-type isoforms of CREM. In Mus musculus (Mouse), this protein is Insulin-like growth factor 1.